The chain runs to 285 residues: VQ motif-containing protein 20 (285 aa).

The segment covering 1–10 (MSSTYKDNHP) has biased composition (basic and acidic residues). Residues 1-68 (MSSTYKDNHP…PSPSSFSSAA (68 aa)) form a disordered region. The span at 11 to 23 (YHHHPHHHHHHPK) shows a compositional bias: basic residues. A VQ motif is present at residues 91–100 (FMALVQKLTG). Residues 195–218 (YSAVAIPPQPPPHPPPPPPPPSMY) form a disordered region. Residues 201–216 (PPQPPPHPPPPPPPPS) are compositionally biased toward pro residues.

It localises to the nucleus. Its function is as follows. May function as negative regulator of plant defense. The sequence is that of VQ motif-containing protein 20 from Arabidopsis thaliana (Mouse-ear cress).